A 100-amino-acid chain; its full sequence is Urease subunit gamma (100 aa).

Belongs to the urease gamma subunit family. As to quaternary structure, heterotrimer of UreA (gamma), UreB (beta) and UreC (alpha) subunits. Three heterotrimers associate to form the active enzyme.

It is found in the cytoplasm. The enzyme catalyses urea + 2 H2O + H(+) = hydrogencarbonate + 2 NH4(+). Its pathway is nitrogen metabolism; urea degradation; CO(2) and NH(3) from urea (urease route): step 1/1. This chain is Urease subunit gamma, found in Synechococcus sp. (strain CC9902).